Consider the following 388-residue polypeptide: Probable peptidoglycan glycosyltransferase FtsW (388 aa).

Residues 1–19 lie on the Cytoplasmic side of the membrane; it reads MMSPSTSAPHNQPIQPELD. Residues 20–40 traverse the membrane as a helical segment; it reads VLLVSTVLLLLGLGLVMVYSA. Topologically, residues 41-55 are periplasmic; the sequence is SIAIAEAKFGEGSSY. A helical membrane pass occupies residues 56–76; the sequence is YFLARQASYILAGIAVGIGCF. The Cytoplasmic segment spans residues 77–89; it reads RIPLRWWQAYSHY. A helical membrane pass occupies residues 90–110; that stretch reads LLGLGILLLLVVLIPGISHEI. Residues 111-116 lie on the Periplasmic side of the membrane; it reads NGSRRW. Residues 117–137 traverse the membrane as a helical segment; that stretch reads IPLGITSFQPSELMKLIILIF. Over 138 to 151 the chain is Cytoplasmic; that stretch reads TADYVVRKAAFKDH. A helical transmembrane segment spans residues 152–172; sequence FFKGFLPILALLTIVSLLLLM. Topologically, residues 173 to 175 are periplasmic; sequence EPD. The next 2 membrane-spanning stretches (helical) occupy residues 176–196 and 197–217; these read LGAT…NGMS and LKMF…LIII. The Periplasmic segment spans residues 218–284; it reads EPYRMDRINA…DFMFAVLAEE (67 aa). Residues 285–305 form a helical membrane-spanning segment; the sequence is LGFAGVVTVISLFFFLLVRIF. Residues 306–324 lie on the Cytoplasmic side of the membrane; sequence KVGRTAARLGDQFGSLVAQ. Residues 325-345 traverse the membrane as a helical segment; it reads GIGVWLGLQAFINMGVNMGLL. Residues 346–351 are Periplasmic-facing; sequence PTKGLT. Residues 352–372 traverse the membrane as a helical segment; it reads LPFMSYGGSSIVINSIAIAIL. Residues 373-388 are Cytoplasmic-facing; it reads LRIDWENRLKRRGLNA.

This sequence belongs to the SEDS family. FtsW subfamily.

It is found in the cell inner membrane. The enzyme catalyses [GlcNAc-(1-&gt;4)-Mur2Ac(oyl-L-Ala-gamma-D-Glu-L-Lys-D-Ala-D-Ala)](n)-di-trans,octa-cis-undecaprenyl diphosphate + beta-D-GlcNAc-(1-&gt;4)-Mur2Ac(oyl-L-Ala-gamma-D-Glu-L-Lys-D-Ala-D-Ala)-di-trans,octa-cis-undecaprenyl diphosphate = [GlcNAc-(1-&gt;4)-Mur2Ac(oyl-L-Ala-gamma-D-Glu-L-Lys-D-Ala-D-Ala)](n+1)-di-trans,octa-cis-undecaprenyl diphosphate + di-trans,octa-cis-undecaprenyl diphosphate + H(+). It participates in cell wall biogenesis; peptidoglycan biosynthesis. Its function is as follows. Peptidoglycan polymerase that is essential for cell division. This is Probable peptidoglycan glycosyltransferase FtsW from Nitrosomonas europaea (strain ATCC 19718 / CIP 103999 / KCTC 2705 / NBRC 14298).